The sequence spans 102 residues: ATP-dependent Clp protease adapter protein ClpS (102 aa).

The protein belongs to the ClpS family. As to quaternary structure, binds to the N-terminal domain of the chaperone ClpA.

Involved in the modulation of the specificity of the ClpAP-mediated ATP-dependent protein degradation. The polypeptide is ATP-dependent Clp protease adapter protein ClpS (Shewanella piezotolerans (strain WP3 / JCM 13877)).